Consider the following 174-residue polypeptide: Shikimate kinase (174 aa).

Residue 15–20 (GTGKST) participates in ATP binding. Residue serine 19 coordinates Mg(2+). Substrate contacts are provided by aspartate 37, arginine 61, and glycine 82. Position 120 (arginine 120) interacts with ATP. Position 138 (arginine 138) interacts with substrate.

This sequence belongs to the shikimate kinase family. As to quaternary structure, monomer. It depends on Mg(2+) as a cofactor.

The protein localises to the cytoplasm. The catalysed reaction is shikimate + ATP = 3-phosphoshikimate + ADP + H(+). The protein operates within metabolic intermediate biosynthesis; chorismate biosynthesis; chorismate from D-erythrose 4-phosphate and phosphoenolpyruvate: step 5/7. Its function is as follows. Catalyzes the specific phosphorylation of the 3-hydroxyl group of shikimic acid using ATP as a cosubstrate. The polypeptide is Shikimate kinase (Staphylococcus aureus (strain Mu3 / ATCC 700698)).